A 6713-amino-acid chain; its full sequence is Extracellular matrix-binding protein EbhA (6713 aa).

44 FIVAR domains span residues 1–58, 126–184, 252–310, 378–436, 504–562, 630–688, 756–814, 882–940, 1008–1066, 1134–1192, 1260–1318, 1386–1444, 1512–1570, 1638–1696, 1764–1822, 1890–1948, 2142–2200, 2268–2325, 2393–2451, 2519–2577, 2645–2703, 2771–2829, 2897–2955, 3023–3081, 3149–3207, 3275–3333, 3401–3459, 3527–3585, 3653–3711, 3779–3837, 3905–3963, 4031–4089, 4157–4218, 4283–4341, 4409–4467, 4535–4592, 4660–4718, 4786–4844, 4912–4970, 5038–5096, 5164–5222, 5290–5344, 5412–5471, and 5666–5722; these read MGNL…VEQA, AMGQ…VTAA, AMKG…ITQA, QMGN…VEAA, AMAN…VENA, AMGT…INQI, AMGQ…VDRA, AMNS…VDNA, AMGA…INDM, AMTA…VNSA, AMHS…VEQA, AMGQ…VERA, AMTA…VTNA, AMKG…INQA, AMTN…VETA, AMNQ…INQK, AMGN…VQAA, AMGQ…VEAA, AMQR…VEQA, AMDQ…VTAA, AMNQ…VTQA, AMER…VEAA, AMGN…VEAA, AMDK…INQA, AMGN…VEQA, AMTQ…ITAA, AMTQ…IQQA, AMTN…VEQA, AMTQ…VAQA, AMGT…VTKA, AMGN…ITRA, AMDQ…ITNE, AMEL…VNGA, AMHG…INQV, LMDA…VSSA, AMKA…IDQA, AMEA…VEQL, AMQA…VEQL, AMET…VEQA, SMDQ…VDQA, AMDQ…VIKL, and AMET…INGA. The chain crosses the membrane as a helical span at residues 6518–6540; the sequence is VIKNAIGVVGISGLLASFWFFIA. Positions 6616 to 6713 are disordered; it reads RRKEDEEDVE…KKKKSKKNKK (98 aa). 2 stretches are compositionally biased toward basic and acidic residues: residues 6631 to 6641 and 6680 to 6690; these read TDEKVLKDNEH and QKDNQSKDKKS. The segment covering 6695–6713 has biased composition (basic residues); it reads TSKKVAAKKKKKKSKKNKK.

The protein resides in the cell membrane. In Staphylococcus aureus (strain Mu3 / ATCC 700698), this protein is Extracellular matrix-binding protein EbhA (ebhA).